The following is a 309-amino-acid chain: Prepilin leader peptidase/N-methyltransferase (309 aa).

Residues 35-55 (MQLAFAIVLGLVVGSFINVVV) traverse the membrane as a helical segment. Cysteine 96, cysteine 99, cysteine 121, and cysteine 124 together coordinate Zn(2+). Helical transmembrane passes span 147-167 (LALF…AALL), 183-203 (LTLP…FASL), 207-227 (VIGA…FKLL), 230-250 (IEGI…WLGW), 253-273 (LPQV…VATW), and 288-308 (FLAA…LLLG).

The protein belongs to the peptidase A24 family. The cofactor is Zn(2+).

It localises to the cell inner membrane. The catalysed reaction is Typically cleaves a -Gly-|-Phe- bond to release an N-terminal, basic peptide of 5-8 residues from type IV prepilin, and then N-methylates the new N-terminal amino group, the methyl donor being S-adenosyl-L-methionine.. Its function is as follows. Plays an essential role in type IV pili and type II pseudopili formation by proteolytically removing the leader sequence from substrate proteins and subsequently monomethylating the alpha-amino group of the newly exposed N-terminal phenylalanine. The chain is Prepilin leader peptidase/N-methyltransferase (gspO) from Burkholderia pseudomallei (strain K96243).